Consider the following 436-residue polypeptide: 3-ketoacyl-CoA thiolase (436 aa).

Cys99 (acyl-thioester intermediate) is an active-site residue. Active-site proton acceptor residues include His392 and Cys422.

It belongs to the thiolase-like superfamily. Thiolase family. As to quaternary structure, heterotetramer of two alpha chains (FadJ) and two beta chains (FadI).

The protein resides in the cytoplasm. It carries out the reaction an acyl-CoA + acetyl-CoA = a 3-oxoacyl-CoA + CoA. It functions in the pathway lipid metabolism; fatty acid beta-oxidation. Functionally, catalyzes the final step of fatty acid oxidation in which acetyl-CoA is released and the CoA ester of a fatty acid two carbons shorter is formed. The chain is 3-ketoacyl-CoA thiolase from Shewanella sp. (strain ANA-3).